Reading from the N-terminus, the 98-residue chain is MFEQNLTSEALTVTTVTSQDQITQKPLRDSVKASLKNYLAQLNGQEVTELYELVLAEVEQPLLDTIMQYTRGNQTRAATMMGINRGTLRKKLKKYGMN.

Residues 74–93 (QTRAATMMGINRGTLRKKLK) constitute a DNA-binding region (H-T-H motif).

The protein belongs to the transcriptional regulatory Fis family. As to quaternary structure, homodimer.

Activates ribosomal RNA transcription. Plays a direct role in upstream activation of rRNA promoters. This Vibrio parahaemolyticus serotype O3:K6 (strain RIMD 2210633) protein is DNA-binding protein Fis.